Consider the following 250-residue polypeptide: Geranylgeranylglyceryl phosphate synthase (250 aa).

Residues D26 and S55 each contribute to the Mg(2+) site. Sn-glycerol 1-phosphate is bound by residues 174–180, 205–206, and 227–228; these read YLEAGSG, GG, and GT.

This sequence belongs to the GGGP/HepGP synthase family. Group II subfamily. Mg(2+) is required as a cofactor.

It is found in the cytoplasm. It catalyses the reaction sn-glycerol 1-phosphate + (2E,6E,10E)-geranylgeranyl diphosphate = sn-3-O-(geranylgeranyl)glycerol 1-phosphate + diphosphate. The protein operates within membrane lipid metabolism; glycerophospholipid metabolism. Its function is as follows. Prenyltransferase that catalyzes the transfer of the geranylgeranyl moiety of geranylgeranyl diphosphate (GGPP) to the C3 hydroxyl of sn-glycerol-1-phosphate (G1P). This reaction is the first ether-bond-formation step in the biosynthesis of archaeal membrane lipids. The protein is Geranylgeranylglyceryl phosphate synthase of Nitrosopumilus maritimus (strain SCM1).